Reading from the N-terminus, the 375-residue chain is 4,4'-diaponeurosporenoate glycosyltransferase (375 aa).

A run of 4 helical transmembrane segments spans residues 7 to 23 (LLHASTGLSLISGYLMY), 112 to 132 (ACYLGASYTVSDILIFMDADV), 280 to 300 (IMMLIILWMVGCITSFSGLAL), and 333 to 353 (FSILFLAINSILFLVFILVYI).

Belongs to the glycosyltransferase 2 family. CrtQ subfamily.

It localises to the cell membrane. Its pathway is carotenoid biosynthesis; staphyloxanthin biosynthesis; staphyloxanthin from farnesyl diphosphate: step 4/5. Its function is as follows. Catalyzes the glycosylation of 4,4'-diaponeurosporenoate, i.e. the esterification of glucose at the C1'' position with the carboxyl group of 4,4'-diaponeurosporenic acid, to form glycosyl-4,4'-diaponeurosporenoate. This is a step in the biosynthesis of staphyloxanthin, an orange pigment present in most staphylococci strains. The chain is 4,4'-diaponeurosporenoate glycosyltransferase (crtQ) from Staphylococcus haemolyticus (strain JCSC1435).